A 200-amino-acid polypeptide reads, in one-letter code: MAKFTQHTGIVVPLDAANVDTDAIIPKQFLQKVTRTGFGQHLFNDWRFLDNAGQQPNPDFVLNQPRYRGASILLARENFGCGSSREHAPWALTDYGFHAVIAPSFADIFYGNSFNNQLLPITLSEEQINELFAMVAAQEGMTFTVDLERQQVVAGDKVYPFEIDSFRRHYMINGLDSIGLTLMHDEAISQYESRQPAFLN.

This sequence belongs to the LeuD family. LeuD type 1 subfamily. Heterodimer of LeuC and LeuD.

It carries out the reaction (2R,3S)-3-isopropylmalate = (2S)-2-isopropylmalate. The protein operates within amino-acid biosynthesis; L-leucine biosynthesis; L-leucine from 3-methyl-2-oxobutanoate: step 2/4. Functionally, catalyzes the isomerization between 2-isopropylmalate and 3-isopropylmalate, via the formation of 2-isopropylmaleate. The chain is 3-isopropylmalate dehydratase small subunit from Sodalis glossinidius (strain morsitans).